Reading from the N-terminus, the 192-residue chain is Casparian strip membrane protein 4 (192 aa).

At 1-29 the chain is on the cytoplasmic side; that stretch reads MTKDVVIEHGESSKAPLVPAPVAAGVGRA. The chain crosses the membrane as a helical span at residues 30–50; that stretch reads VSIADVFLRFLSIVATIASAI. The Extracellular segment spans residues 51–79; the sequence is SMGTTNETLPFFTQFIQFEAKYSDLPSFT. Asn56 carries N-linked (GlcNAc...) asparagine glycosylation. Residues 80 to 100 traverse the membrane as a helical segment; sequence FFVAANAVVCTYLVLSIPLSI. At 101–112 the chain is on the cytoplasmic side; sequence VHIIRPRARYSR. The helical transmembrane segment at 113-133 threads the bilayer; the sequence is LILVFFDAVMLALLTAGASAA. At 134-166 the chain is on the extracellular side; the sequence is AAIVYLAHKGNVRANWFAICQQFDSFCERISGS. A helical transmembrane segment spans residues 167–187; that stretch reads LIGSFAAMVLLIVLIFLSAFA. Topologically, residues 188–192 are cytoplasmic; that stretch reads LARRH.

This sequence belongs to the Casparian strip membrane proteins (CASP) family. Homodimer and heterodimers.

Its subcellular location is the cell membrane. Functionally, regulates membrane-cell wall junctions and localized cell wall deposition. Required for establishment of the Casparian strip membrane domain (CSD) and the subsequent formation of Casparian strips, a cell wall modification of the root endodermis that determines an apoplastic barrier between the intraorganismal apoplasm and the extraorganismal apoplasm and prevents lateral diffusion. The chain is Casparian strip membrane protein 4 from Sorghum bicolor (Sorghum).